The following is a 425-amino-acid chain: Serine--tRNA ligase (425 aa).

228-230 (TAE) contacts L-serine. 259–261 (RSE) lines the ATP pocket. Position 282 (Glu-282) interacts with L-serine. 346-349 (EIAS) contributes to the ATP binding site. L-serine is bound at residue Ser-382.

The protein belongs to the class-II aminoacyl-tRNA synthetase family. Type-1 seryl-tRNA synthetase subfamily. Homodimer. The tRNA molecule binds across the dimer.

Its subcellular location is the cytoplasm. The enzyme catalyses tRNA(Ser) + L-serine + ATP = L-seryl-tRNA(Ser) + AMP + diphosphate + H(+). It catalyses the reaction tRNA(Sec) + L-serine + ATP = L-seryl-tRNA(Sec) + AMP + diphosphate + H(+). The protein operates within aminoacyl-tRNA biosynthesis; selenocysteinyl-tRNA(Sec) biosynthesis; L-seryl-tRNA(Sec) from L-serine and tRNA(Sec): step 1/1. In terms of biological role, catalyzes the attachment of serine to tRNA(Ser). Is also able to aminoacylate tRNA(Sec) with serine, to form the misacylated tRNA L-seryl-tRNA(Sec), which will be further converted into selenocysteinyl-tRNA(Sec). This Rickettsia peacockii (strain Rustic) protein is Serine--tRNA ligase.